We begin with the raw amino-acid sequence, 80 residues long: Conotoxin Bt6.5 (80 aa).

Positions 1-22 (MKLTCVLIIAVLFLTACQLATA) are cleaved as a signal peptide. A propeptide spanning residues 23 to 45 (KTYSTGRQKHRALRSTDKNIKLS) is cleaved from the precursor. Cystine bridges form between Cys-48–Cys-62, Cys-55–Cys-66, and Cys-61–Cys-73.

Belongs to the conotoxin O1 superfamily. In terms of tissue distribution, expressed by the venom duct.

The protein resides in the secreted. In terms of biological role, when injected intracranially in mice, induces a series of symptoms such as quivering, climbing, scratching, barrel rolling and paralysis of limbs. Unexpectedly, no effect is observed on ionic currents when tested on locust DUM neuron. The polypeptide is Conotoxin Bt6.5 (Conus betulinus (Beech cone)).